An 87-amino-acid chain; its full sequence is DNA-directed RNA polymerase subunit omega (87 aa).

The protein belongs to the RNA polymerase subunit omega family. In terms of assembly, the RNAP catalytic core consists of 2 alpha, 1 beta, 1 beta' and 1 omega subunit. When a sigma factor is associated with the core the holoenzyme is formed, which can initiate transcription.

The enzyme catalyses RNA(n) + a ribonucleoside 5'-triphosphate = RNA(n+1) + diphosphate. Functionally, promotes RNA polymerase assembly. Latches the N- and C-terminal regions of the beta' subunit thereby facilitating its interaction with the beta and alpha subunits. This Thioalkalivibrio sulfidiphilus (strain HL-EbGR7) protein is DNA-directed RNA polymerase subunit omega.